The chain runs to 863 residues: Nitrate reductase [NADH] (863 aa).

Cysteine 137 provides a ligand contact to Mo-molybdopterin. A Cytochrome b5 heme-binding domain is found at 484–559 (KKYVTKAMLE…LEQFYIAELA (76 aa)). Heme is bound by residues histidine 519 and histidine 542. The region spanning 602 to 719 (KKQKAAELKE…KGPIGHFHYD (118 aa)) is the FAD-binding FR-type domain. FAD-binding positions include 659 to 662 (RAYT), 676 to 680 (VVKIY), phenylalanine 688, 693 to 695 (KFS), and threonine 746.

The protein belongs to the nitrate reductase family. In terms of assembly, homodimer. Requires FAD as cofactor. It depends on Mo-molybdopterin as a cofactor. The cofactor is heme.

The catalysed reaction is nitrite + NAD(+) + H2O = nitrate + NADH + H(+). Its function is as follows. Nitrate reductase is a key enzyme involved in the first step of nitrate assimilation in plants, fungi and bacteria. This is Nitrate reductase [NADH] from Ulva prolifera (Green seaweed).